The primary structure comprises 895 residues: Probable methyltransferase PMT27 (895 aa).

The Cytoplasmic segment spans residues 1-16; that stretch reads MAFGRGRGNKRTSTSS. The chain crosses the membrane as a helical; Signal-anchor for type II membrane protein span at residues 17–37; sequence YASTITMVIFVALCVFGVWML. At 38–895 the chain is on the lumenal side; sequence SSNSVIPPQI…KGFWRPETSQ (858 aa). Over residues 43–52 the composition is skewed to polar residues; sequence IPPQITQGST. The tract at residues 43-362 is disordered; the sequence is IPPQITQGST…QRQTSESNTV (320 aa). Over residues 90-114 the composition is skewed to basic and acidic residues; sequence NPGKLPDDAVKSEDEQRKSAKEKSE. Residues 115–127 are compositionally biased toward low complexity; it reads TTSSKTQTQETQQ. The segment covering 129–143 has biased composition (basic and acidic residues); that stretch reads NDDKISEEKEKDNGK. N145 carries N-linked (GlcNAc...) asparagine glycosylation. The span at 154–174 shows a compositional bias: basic and acidic residues; that stretch reads GQMKKVVKEFEKEQKQQRDED. Positions 176–191 are enriched in low complexity; sequence GTQPKGTQGQEQGQGK. Composition is skewed to polar residues over residues 199–232 and 243–256; these read GNKQ…GETS and PEEQ…TGQQ. Residues 257 to 320 show a composition bias toward basic and acidic residues; the sequence is NEEKTTASEE…RKDEKKHEQG (64 aa). The span at 337–346 shows a compositional bias: polar residues; sequence SQKSWKSQAT. N-linked (GlcNAc...) asparagine glycans are attached at residues N375 and N709.

This sequence belongs to the methyltransferase superfamily.

It is found in the endoplasmic reticulum membrane. This is Probable methyltransferase PMT27 from Arabidopsis thaliana (Mouse-ear cress).